Here is a 199-residue protein sequence, read N- to C-terminus: NADH-quinone oxidoreductase subunit C (199 aa).

It belongs to the complex I 30 kDa subunit family. In terms of assembly, NDH-1 is composed of 14 different subunits. Subunits NuoB, C, D, E, F, and G constitute the peripheral sector of the complex.

The protein resides in the cell inner membrane. It catalyses the reaction a quinone + NADH + 5 H(+)(in) = a quinol + NAD(+) + 4 H(+)(out). Its function is as follows. NDH-1 shuttles electrons from NADH, via FMN and iron-sulfur (Fe-S) centers, to quinones in the respiratory chain. The immediate electron acceptor for the enzyme in this species is believed to be ubiquinone. Couples the redox reaction to proton translocation (for every two electrons transferred, four hydrogen ions are translocated across the cytoplasmic membrane), and thus conserves the redox energy in a proton gradient. The chain is NADH-quinone oxidoreductase subunit C from Paramagnetospirillum magneticum (strain ATCC 700264 / AMB-1) (Magnetospirillum magneticum).